The sequence spans 187 residues: uncharacterized protein (187 aa).

4 helical membrane passes run 29 to 50 (IFID…VYWI), 70 to 92 (FVIG…INAY), 128 to 147 (IFFA…SVLR), and 154 to 176 (LALV…ISYL).

It localises to the cell membrane. This is an uncharacterized protein from Archaeoglobus fulgidus (strain ATCC 49558 / DSM 4304 / JCM 9628 / NBRC 100126 / VC-16).